Reading from the N-terminus, the 535-residue chain is INSYN2B protein (535 aa).

Disordered stretches follow at residues 23-85 (LVKQ…SFPR), 215-346 (EARE…RSSS), and 360-387 (KLPS…PRQE). Residues 46 to 59 (KNPTGVTEVNTQTP) show a composition bias toward polar residues. The segment covering 219 to 232 (SALSPESSAEESNS) has biased composition (low complexity). Polar residues-rich tracts occupy residues 258–269 (CSNTNSSASNMP), 307–319 (RTHS…SRSQ), and 361–375 (LPSQ…TGVG). A coiled-coil region spans residues 411–448 (DLQGRLQSVEESLHSNQEKIKVLLNVIQDLEKAHALTE). Positions 493-528 (LEEAEPTEEAPSPPKSPAEAPVPEKQDLRRKSKKVK) are disordered.

This sequence belongs to the INSYN2 family.

The chain is INSYN2B protein (Insyn2b) from Mus musculus (Mouse).